An 883-amino-acid polypeptide reads, in one-letter code: Phosphoenolpyruvate carboxylase (883 aa).

Residues histidine 138 and lysine 546 contribute to the active site.

The protein belongs to the PEPCase type 1 family. Mg(2+) is required as a cofactor.

The enzyme catalyses oxaloacetate + phosphate = phosphoenolpyruvate + hydrogencarbonate. In terms of biological role, forms oxaloacetate, a four-carbon dicarboxylic acid source for the tricarboxylic acid cycle. The polypeptide is Phosphoenolpyruvate carboxylase (Shigella dysenteriae serotype 1 (strain Sd197)).